The primary structure comprises 1336 residues: DNA-directed RNA polymerase subunit beta' (1336 aa).

Residues C60, C62, C75, and C78 each coordinate Zn(2+). The Mg(2+) site is built by D535, D537, and D539. Residues C902, C984, C991, and C994 each coordinate Zn(2+).

This sequence belongs to the RNA polymerase beta' chain family. In terms of assembly, the RNAP catalytic core consists of 2 alpha, 1 beta, 1 beta' and 1 omega subunit. When a sigma factor is associated with the core the holoenzyme is formed, which can initiate transcription. It depends on Mg(2+) as a cofactor. Zn(2+) is required as a cofactor.

It carries out the reaction RNA(n) + a ribonucleoside 5'-triphosphate = RNA(n+1) + diphosphate. DNA-dependent RNA polymerase catalyzes the transcription of DNA into RNA using the four ribonucleoside triphosphates as substrates. In Corynebacterium diphtheriae (strain ATCC 700971 / NCTC 13129 / Biotype gravis), this protein is DNA-directed RNA polymerase subunit beta'.